Here is a 546-residue protein sequence, read N- to C-terminus: Cytochrome P450 monooxygenase fumoB (546 aa).

A helical membrane pass occupies residues 13-33; it reads LGYYEKLAGILGIIGLVLLFW. Residue Asn147 is glycosylated (N-linked (GlcNAc...) asparagine). Heme is bound at residue Cys488.

The protein belongs to the cytochrome P450 family. The cofactor is heme.

It is found in the membrane. It functions in the pathway secondary metabolite biosynthesis. Functionally, cytochrome P450 monooxygenase; part of the gene cluster that mediates the biosynthesis of fumosorinone, a 2-pyridone alkaloid that acts as an inhibitor of protein tyrosine phosphatase 1B which is implicated asa negative regulator of insulin receptor signaling and a potential drug target for the treatment of type II diabetes and other associated metabolic syndromes. The polyketide-amino acid backbone of fumosorinone is first assembled by the PKS-NRPS hybrid fumoS. The PKS modules condense one acetyl-CoA starter unit with 7 malonyl-CoA units, programmed C-methylations occurring after the first 3 and the sixth extensions, and cycles of full reduction occurring after the first 2 extensions. Because fumoS lacks a designated enoyl reductase (ER) domain, the required activity is provided the enoyl reductase fumoC. Upon formation of the polyketide backbone on the thiotemplate, the polyketide is transferred to the NRPS module and linked to tyrosine to produce the acyltetramic acid intermediate called prefumosorinone A. The cytochrome P450 monooxygenase fumoA then probably catalyzes an unprecedented oxidative ring expansion of prefumosorinone A to form prefumosorinone B which contains the 2-pyridone core of fumosorinone. The cytochrome P450 monooxygenase fumoB might hydroxylate the nitrogen of prefumosorinone B, but not the acyltetramic acid prefumosorinone A, to form fumosorinone. The protein is Cytochrome P450 monooxygenase fumoB of Cordyceps fumosorosea (strain ARSEF 2679) (Isaria fumosorosea).